The following is a 375-amino-acid chain: Carbamoyl phosphate synthase small chain (375 aa).

Residues 1–184 (MVSLYLENGL…LDYKPFDEKT (184 aa)) form a CPSase region. Ser44, Gly240, and Gly242 together coordinate L-glutamine. One can recognise a Glutamine amidotransferase type-1 domain in the interval 188-375 (IIAVLDFGAK…KEFVELLKDF (188 aa)). Cys268 serves as the catalytic Nucleophile. Residues Leu269, Gln272, Asn310, and Tyr313 each coordinate L-glutamine. Active-site residues include His351 and Glu353.

The protein belongs to the CarA family. As to quaternary structure, composed of two chains; the small (or glutamine) chain promotes the hydrolysis of glutamine to ammonia, which is used by the large (or ammonia) chain to synthesize carbamoyl phosphate. Tetramer of heterodimers (alpha,beta)4.

The enzyme catalyses hydrogencarbonate + L-glutamine + 2 ATP + H2O = carbamoyl phosphate + L-glutamate + 2 ADP + phosphate + 2 H(+). The catalysed reaction is L-glutamine + H2O = L-glutamate + NH4(+). The protein operates within amino-acid biosynthesis; L-arginine biosynthesis; carbamoyl phosphate from bicarbonate: step 1/1. Its pathway is pyrimidine metabolism; UMP biosynthesis via de novo pathway; (S)-dihydroorotate from bicarbonate: step 1/3. In terms of biological role, small subunit of the glutamine-dependent carbamoyl phosphate synthetase (CPSase). CPSase catalyzes the formation of carbamoyl phosphate from the ammonia moiety of glutamine, carbonate, and phosphate donated by ATP, constituting the first step of 2 biosynthetic pathways, one leading to arginine and/or urea and the other to pyrimidine nucleotides. The small subunit (glutamine amidotransferase) binds and cleaves glutamine to supply the large subunit with the substrate ammonia. The polypeptide is Carbamoyl phosphate synthase small chain (Helicobacter pylori (strain ATCC 700392 / 26695) (Campylobacter pylori)).